The primary structure comprises 303 residues: MEASGKLRAYLELVRAHNLLGTVLGVIAGAALLGEVNVAAAIASASAAAVAAGGYAINDYFDVEIDKVNKPERPIPSGRVGAEEARKLALALLALGPLLGLAVGPLTGAYAALNAVLMYYYSKSLKKTGLPGNLAVSFSTASTLLYGSLATAEWAGEVARVLRTIPIILMVFLMTLAREVVKGVEDYVGDKEGGVKTLAVVKGPDFALRAALALACASLALAYLAAPLLSLGYAFLAFVTLGGLLSLASVAACLRSEDPVRCAAKPRRAMKVAMFLGLIGILVDRLVQPVFYPHVLHAGGEEG.

Helical transmembrane passes span 23–43, 88–108, 130–150, 164–184, 206–228, 232–254, and 272–292; these read VLGV…AAIA, LALA…PLTG, LPGN…GSLA, TIPI…VKGV, FALR…AAPL, GYAF…AACL, and VAMF…PVFY.

The protein belongs to the UbiA prenyltransferase family. DGGGP synthase subfamily. The cofactor is Mg(2+).

The protein localises to the cell membrane. It catalyses the reaction sn-3-O-(geranylgeranyl)glycerol 1-phosphate + (2E,6E,10E)-geranylgeranyl diphosphate = 2,3-bis-O-(geranylgeranyl)-sn-glycerol 1-phosphate + diphosphate. Its pathway is membrane lipid metabolism; glycerophospholipid metabolism. In terms of biological role, prenyltransferase that catalyzes the transfer of the geranylgeranyl moiety of geranylgeranyl diphosphate (GGPP) to the C2 hydroxyl of (S)-3-O-geranylgeranylglyceryl phosphate (GGGP). This reaction is the second ether-bond-formation step in the biosynthesis of archaeal membrane lipids. This Ignicoccus hospitalis (strain KIN4/I / DSM 18386 / JCM 14125) protein is Digeranylgeranylglyceryl phosphate synthase.